The following is a 552-amino-acid chain: CTP synthase (552 aa).

The tract at residues 1–270 (MTKYVFVTGG…DRIICEELKL (270 aa)) is amidoligase domain. S13 serves as a coordination point for CTP. S13 lines the UTP pocket. ATP-binding positions include 14-19 (SLGKGI) and D71. Mg(2+)-binding residues include D71 and E144. Residues 151-153 (DIE), 191-196 (KTKPTQ), and K227 each bind CTP. UTP is bound by residues 191 to 196 (KTKPTQ) and K227. One can recognise a Glutamine amidotransferase type-1 domain in the interval 295-547 (TIGMVGKYVD…VEAALANKQA (253 aa)). G356 contacts L-glutamine. The active-site Nucleophile; for glutamine hydrolysis is C383. L-glutamine contacts are provided by residues 384–387 (LGMQ), E407, and R473. Active-site residues include H520 and E522.

Belongs to the CTP synthase family. As to quaternary structure, homotetramer.

The enzyme catalyses UTP + L-glutamine + ATP + H2O = CTP + L-glutamate + ADP + phosphate + 2 H(+). It carries out the reaction L-glutamine + H2O = L-glutamate + NH4(+). The catalysed reaction is UTP + NH4(+) + ATP = CTP + ADP + phosphate + 2 H(+). The protein operates within pyrimidine metabolism; CTP biosynthesis via de novo pathway; CTP from UDP: step 2/2. Allosterically activated by GTP, when glutamine is the substrate; GTP has no effect on the reaction when ammonia is the substrate. The allosteric effector GTP functions by stabilizing the protein conformation that binds the tetrahedral intermediate(s) formed during glutamine hydrolysis. Inhibited by the product CTP, via allosteric rather than competitive inhibition. Catalyzes the ATP-dependent amination of UTP to CTP with either L-glutamine or ammonia as the source of nitrogen. Regulates intracellular CTP levels through interactions with the four ribonucleotide triphosphates. The protein is CTP synthase of Burkholderia ambifaria (strain MC40-6).